Reading from the N-terminus, the 148-residue chain is Large ribosomal subunit protein uL15A (148 aa).

2 stretches are compositionally biased toward basic residues: residues 1–13 and 21–31; these read MPTH…KLRG and RIGKHRKHPGG. The segment at 1-36 is disordered; that stretch reads MPTHVSKTRKLRGHVSAGHGRIGKHRKHPGGRGKAG.

Belongs to the universal ribosomal protein uL15 family. Component of the large ribosomal subunit (LSU). Mature yeast ribosomes consist of a small (40S) and a large (60S) subunit. The 40S small subunit contains 1 molecule of ribosomal RNA (18S rRNA) and at least 33 different proteins. The large 60S subunit contains 3 rRNA molecules (25S, 5.8S and 5S rRNA) and at least 46 different proteins.

It localises to the cytoplasm. In terms of biological role, component of the ribosome, a large ribonucleoprotein complex responsible for the synthesis of proteins in the cell. The small ribosomal subunit (SSU) binds messenger RNAs (mRNAs) and translates the encoded message by selecting cognate aminoacyl-transfer RNA (tRNA) molecules. The large subunit (LSU) contains the ribosomal catalytic site termed the peptidyl transferase center (PTC), which catalyzes the formation of peptide bonds, thereby polymerizing the amino acids delivered by tRNAs into a polypeptide chain. The nascent polypeptides leave the ribosome through a tunnel in the LSU and interact with protein factors that function in enzymatic processing, targeting, and the membrane insertion of nascent chains at the exit of the ribosomal tunnel. The chain is Large ribosomal subunit protein uL15A (rpl2802) from Schizosaccharomyces pombe (strain 972 / ATCC 24843) (Fission yeast).